A 182-amino-acid chain; its full sequence is UPF0397 protein VV2_1534 (182 aa).

5 helical membrane-spanning segments follow: residues 8 to 28, 41 to 61, 72 to 92, 110 to 130, and 146 to 166; these read VVVI…MFGI, AVLA…VGFI, WGVW…IGLF, FSLF…CSAF, and QLTI…YFIL.

Belongs to the UPF0397 family.

It localises to the cell membrane. The protein is UPF0397 protein VV2_1534 of Vibrio vulnificus (strain CMCP6).